The sequence spans 201 residues: dTTP/UTP pyrophosphatase (201 aa).

Asp75 acts as the Proton acceptor in catalysis.

It belongs to the Maf family. YhdE subfamily. A divalent metal cation serves as cofactor.

It localises to the cytoplasm. It carries out the reaction dTTP + H2O = dTMP + diphosphate + H(+). The catalysed reaction is UTP + H2O = UMP + diphosphate + H(+). Its function is as follows. Nucleoside triphosphate pyrophosphatase that hydrolyzes dTTP and UTP. May have a dual role in cell division arrest and in preventing the incorporation of modified nucleotides into cellular nucleic acids. This is dTTP/UTP pyrophosphatase from Pseudomonas fluorescens (strain ATCC BAA-477 / NRRL B-23932 / Pf-5).